We begin with the raw amino-acid sequence, 100 residues long: Urease subunit gamma (100 aa).

It belongs to the urease gamma subunit family. As to quaternary structure, heterotrimer of UreA (gamma), UreB (beta) and UreC (alpha) subunits. Three heterotrimers associate to form the active enzyme.

The protein localises to the cytoplasm. It carries out the reaction urea + 2 H2O + H(+) = hydrogencarbonate + 2 NH4(+). The protein operates within nitrogen metabolism; urea degradation; CO(2) and NH(3) from urea (urease route): step 1/1. In Nitrosococcus oceani (strain ATCC 19707 / BCRC 17464 / JCM 30415 / NCIMB 11848 / C-107), this protein is Urease subunit gamma.